Reading from the N-terminus, the 562-residue chain is MNNDKRPLYIPYAGPALMATPLLNKGSAFSAEERSSFNLEGLLPETTETIQEQVERAYQQYKSFESDMDKHIYLRNIQDTNETLFYRLVQNHISEMMPIIYTPTVGAACENFSNIYRRGRGLFISYPNRDRIDDLLNNAANHNVKVIVVTDGERILGLGDQGIGGMGIPIGKLSLYTACGGISPAYTLPIVLDVGTNNPQRLADPMYMGWRHPRITGPDYDAFVEEFIQAVQRRWPDALIQFEDFAQKNAMPLLERYKDRICCFNDDIQGTAAVTVGSLLAACKAAGTQLSKQRITFLGAGSAGCGIAEAIIAQMVSEGISDEKARSQVYMVDRWGLLQEGMPNLLDFQQRLVQKHSNTKEWENEGNGFSLLDVMRNAKPTVLIGVSGAPGLFSQEVIEEMHKHCKRPIVFPLSNPTSRVEATPNDIIRWTNGEALVATGSPFDPVVHEGRTYPIAQCNNSYIFPGIGLGVLAVNAKRVTDEMLMESSRALATCSPLAINGRGALLPPLEEIHLVSKKIAFAVAKKAIEQGVALEITDEALNDAIDQAFWQPVYRRYKRTAF.

Tyr-101 acts as the Proton donor in catalysis. Arg-154 provides a ligand contact to NAD(+). Lys-172 functions as the Proton acceptor in the catalytic mechanism. The a divalent metal cation site is built by Glu-243, Asp-244, and Asp-267. NAD(+) is bound by residues Asp-267 and Asn-415.

Belongs to the malic enzymes family. As to quaternary structure, homotetramer. Mg(2+) serves as cofactor. Mn(2+) is required as a cofactor.

It carries out the reaction (S)-malate + NAD(+) = pyruvate + CO2 + NADH. It catalyses the reaction oxaloacetate + H(+) = pyruvate + CO2. The protein is NAD-dependent malic enzyme of Vibrio parahaemolyticus serotype O3:K6 (strain RIMD 2210633).